The sequence spans 169 residues: Probable NADH dehydrogenase [ubiquinone] 1 alpha subcomplex subunit 5, mitochondrial (169 aa).

The transit peptide at 1 to 11 (MFLRAIGRPLL) directs the protein to the mitochondrion.

The protein belongs to the complex I NDUFA5 subunit family. Complex I is composed of at least 49 different subunits.

The protein localises to the mitochondrion inner membrane. Accessory subunit of the mitochondrial membrane respiratory chain NADH dehydrogenase (Complex I), that is believed not to be involved in catalysis. Complex I functions in the transfer of electrons from NADH to the respiratory chain. The immediate electron acceptor for the enzyme is believed to be ubiquinone. The chain is Probable NADH dehydrogenase [ubiquinone] 1 alpha subcomplex subunit 5, mitochondrial from Arabidopsis thaliana (Mouse-ear cress).